A 347-amino-acid polypeptide reads, in one-letter code: MTDFFQSLGMSYEWAWGLATVAGILLIALPLMLAVAMIIYADRKIWAAIALRRGPNVVGPFGLLQSFADGLKVFLQETIIPSGANRGLFLIAPIITFTVALLAWAVIPFNSGAVLADINVGLLYILAISSLGVYGVILSGWASNSKYPFFSALRASAQMISYEVSIGFILIGVVLFADSFNMNEIVKAQQGHGLGIVNAFGFNLLLFPLAVMFLISSLAETARAPFDLTEAESELVAGYQTEYSSMSFALFWLGEYANVLLMCTLNAVLFWGGWLPPIDWAPLYAVPGIIWLFAKILFFFFVFSWVKATVPRYRYDQLMRLGWKIFLPISLIWIFLISGYLMLTRYS.

8 consecutive transmembrane segments (helical) span residues 21–41, 87–107, 118–138, 157–177, 195–215, 258–278, 283–303, and 323–343; these read VAGILLIALPLMLAVAMIIYA, GLFLIAPIITFTVALLAWAVI, INVGLLYILAISSLGVYGVIL, AQMISYEVSIGFILIGVVLFA, GIVNAFGFNLLLFPLAVMFLI, NVLLMCTLNAVLFWGGWLPPI, LYAVPGIIWLFAKILFFFFVF, and WKIFLPISLIWIFLISGYLML.

The protein belongs to the complex I subunit 1 family. In terms of assembly, NDH-1 is composed of 14 different subunits. Subunits NuoA, H, J, K, L, M, N constitute the membrane sector of the complex.

The protein resides in the cell inner membrane. The enzyme catalyses a quinone + NADH + 5 H(+)(in) = a quinol + NAD(+) + 4 H(+)(out). In terms of biological role, NDH-1 shuttles electrons from NADH, via FMN and iron-sulfur (Fe-S) centers, to quinones in the respiratory chain. The immediate electron acceptor for the enzyme in this species is believed to be ubiquinone. Couples the redox reaction to proton translocation (for every two electrons transferred, four hydrogen ions are translocated across the cytoplasmic membrane), and thus conserves the redox energy in a proton gradient. This subunit may bind ubiquinone. In Sphingopyxis alaskensis (strain DSM 13593 / LMG 18877 / RB2256) (Sphingomonas alaskensis), this protein is NADH-quinone oxidoreductase subunit H.